The sequence spans 226 residues: 2-amino-5-formylamino-6-ribosylaminopyrimidin-4(3H)-one 5'-monophosphate deformylase (226 aa).

Fe cation is bound by residues Glu-29, His-31, Asp-40, and His-108.

This sequence belongs to the creatininase superfamily. FAPy deformylase family. In terms of assembly, homodimer. It depends on Fe(2+) as a cofactor. Requires Zn(2+) as cofactor.

The enzyme catalyses 2-amino-5-formylamino-6-(5-phospho-D-ribosylamino)pyrimidin-4(3H)-one + H2O = 2,5-diamino-6-(1-D-ribosylamino)pyrimidin-4(3H)-one 5'-phosphate + formate + H(+). The protein operates within cofactor biosynthesis; coenzyme F420 biosynthesis. It participates in cofactor biosynthesis; riboflavin biosynthesis. Catalyzes the hydrolysis of the formamide of 2-amino-5-formylamino-6-ribosylamino-4(3H)-pyrimidinone 5'-monophosphate (FAPy) to form 2,5-diamino-6-ribosylamino-4(3H)-pyrimidinone 5'-phosphate (APy). The chain is 2-amino-5-formylamino-6-ribosylaminopyrimidin-4(3H)-one 5'-monophosphate deformylase from Methanocaldococcus vulcanius (strain ATCC 700851 / DSM 12094 / M7) (Methanococcus vulcanius).